The primary structure comprises 46 residues: DKGFGFITPADGSKDVFVHFSAIQSNDFKTLDEGQKVEFSIENGAK.

The 46-residue stretch at 1–46 folds into the CSD domain; the sequence is DKGFGFITPADGSKDVFVHFSAIQSNDFKTLDEGQKVEFSIENGAK.

As to quaternary structure, homodimer.

It is found in the cytoplasm. This is Major cold shock protein (cspA) from Yersinia enterocolitica.